Reading from the N-terminus, the 255-residue chain is 5-oxoprolinase subunit A 1 (255 aa).

It belongs to the LamB/PxpA family. In terms of assembly, forms a complex composed of PxpA, PxpB and PxpC.

It carries out the reaction 5-oxo-L-proline + ATP + 2 H2O = L-glutamate + ADP + phosphate + H(+). In terms of biological role, catalyzes the cleavage of 5-oxoproline to form L-glutamate coupled to the hydrolysis of ATP to ADP and inorganic phosphate. The polypeptide is 5-oxoprolinase subunit A 1 (Bradyrhizobium diazoefficiens (strain JCM 10833 / BCRC 13528 / IAM 13628 / NBRC 14792 / USDA 110)).